We begin with the raw amino-acid sequence, 387 residues long: F-box only protein 4 (387 aa).

Phosphoserine occurs at positions 12 and 48. The 47-residue stretch at 56–102 folds into the F-box domain; the sequence is ASTLTRLPIDVQLYILSFLSPHDLCQLGSTNHYWNETVRDPILWRYF.

In terms of assembly, homodimer. Part of the SCF (SKP1-CUL1-F-box) E3 ubiquitin-protein ligase complex SCF(FBXO4) formed of CUL1, SKP1, RBX1 and FBXO4. Interacts with TERF1; this interaction is prevented in the presence of GNL3L. Identified in a complex with CRYAB and CCND1. In terms of processing, phosphorylation at Ser-12 varies during the cell cycle. It is low in resting cells and high in the S phase and the G2/M phase of the cell cycle. Phosphorylation is decreased during late G1 phase. Phosphorylation at Ser-12 promotes homodimerization and is necessary for optimal ubiquitin ligase activity towards CCND1.

The protein resides in the cytoplasm. It participates in protein modification; protein ubiquitination. Its function is as follows. Substrate recognition component of a SCF (SKP1-CUL1-F-box protein) E3 ubiquitin-protein ligase complex that mediates the ubiquitination and subsequent proteasomal degradation of target proteins. Promotes ubiquitination of cyclin-D1 (CCND1) and its subsequent proteasomal degradation. However, it does not act as a major regulator of CCND1 stability during the G1/S transition. Recognizes TERF1 and promotes its ubiquitination together with UBE2D1. Promotes ubiquitination of FXR1 following phosphorylation of FXR1 by GSK3B, leading to FXR1 degradation by the proteasome. This is F-box only protein 4 (FBXO4) from Homo sapiens (Human).